The sequence spans 68 residues: Venom-like beta-defensin (68 aa).

Positions 1–24 (MRLLILFLAVVTLLSLAGPGSAEV) are cleaved as a signal peptide. Disulfide bonds link Cys-33–Cys-60, Cys-40–Cys-54, and Cys-47–Cys-61.

In terms of tissue distribution, highly expressed in intestine, liver and spleen and expressed at lower levels in brain, kidney, lung, testis and venom gland.

Its subcellular location is the secreted. Its function is as follows. Potent antimicrobial peptide that displays activity against S.aureus and P.aeruginosa. Does not inhibit growth of E.coli. This Ornithorhynchus anatinus (Duckbill platypus) protein is Venom-like beta-defensin.